Reading from the N-terminus, the 154-residue chain is Protein ripply (154 aa).

The WRPW motif motif lies at 38–41; sequence WRPW. Disordered regions lie at residues 54 to 86 and 121 to 154; these read IRER…FQHP and EDPA…PILN. The interval 85–119 is ripply homology domain; that stretch reads HPVKLHWSKPVYDYMYQYGKQLLDAFPVQATICIV. The span at 121-140 shows a compositional bias: acidic residues; it reads EDPAQSDDSDFESDYEDDSD.

It belongs to the ripply family. As to expression, in the late gastrula stage, expression appears in the dorsal presomitic mesoderm and in the first three pairs of nascent somites. Expressed strongly in forming somites and then expression is rapidly down-regulated except in the first somite pair where expression is maintained for a longer period. Also expressed in the presumptive notochord and in the tail bud at the 48 hour larval stage. Expression disappears by the 72 hour stage.

It is found in the nucleus. May play a role in somitogenesis. The sequence is that of Protein ripply from Branchiostoma belcheri (Amphioxus).